A 93-amino-acid polypeptide reads, in one-letter code: C-C motif chemokine 14 (93 aa).

A signal peptide spans 1-19; the sequence is MKISVAAIPFFLLITIALG. The O-linked (GalNAc...) serine; partial glycan is linked to S26. 2 disulfides stabilise this stretch: C35/C59 and C36/C75.

The protein belongs to the intercrine beta (chemokine CC) family. In terms of processing, the N-terminal processed forms HCC-1(3-74), HCC-1(4-74) and HCC-1(9-74) are produced in small amounts by proteolytic cleavage after secretion in blood. Post-translationally, HCC-1(1-74), but not HCC-1(3-74) and HCC-1(4-74), is partially O-glycosylated; the O-linked glycan consists of one Gal-GalNAc disaccharide, further modified by two N-acetylneuraminic acids. Expressed constitutively in several normal tissues: spleen, liver, skeletal and heart muscle, gut, and bone marrow, present at high concentrations (1-80 nM) in plasma.

It localises to the secreted. In terms of biological role, has weak activities on human monocytes and acts via receptors that also recognize MIP-1 alpha. It induces intracellular Ca(2+) changes and enzyme release, but no chemotaxis, at concentrations of 100-1,000 nM, and is inactive on T-lymphocytes, neutrophils, and eosinophil leukocytes. Enhances the proliferation of CD34 myeloid progenitor cells. The processed form HCC-1(9-74) is a chemotactic factor that attracts monocytes, eosinophils, and T-cells and is a ligand for CCR1, CCR3 and CCR5. The protein is C-C motif chemokine 14 (CCL14) of Homo sapiens (Human).